Reading from the N-terminus, the 508-residue chain is Maturase K (508 aa).

Belongs to the intron maturase 2 family. MatK subfamily.

Its subcellular location is the plastid. The protein localises to the chloroplast. Its function is as follows. Usually encoded in the trnK tRNA gene intron. Probably assists in splicing its own and other chloroplast group II introns. In Huidobria chilensis (Loasa chilensis), this protein is Maturase K.